Reading from the N-terminus, the 963-residue chain is Longitudinals lacking protein, isoforms J/P/Q/S/Z (963 aa).

The BTB domain maps to valine 32–glutamine 97. Disordered regions lie at residues leucine 115–leucine 200, serine 228–serine 340, aspartate 447–valine 469, and glycine 482–threonine 520. Composition is skewed to low complexity over residues serine 162–proline 175, serine 228–threonine 251, threonine 263–serine 293, and asparagine 329–serine 340. The span at lysine 491–proline 512 shows a compositional bias: polar residues. The segment at tryptophan 849–glutamate 871 adopts a C2H2-type 1; degenerate zinc-finger fold. The C2H2-type 2; degenerate zinc finger occupies tyrosine 878–lysine 901. A disordered region spans residues threonine 900–alanine 963. Positions lysine 901–proline 915 are enriched in basic and acidic residues. The segment covering serine 937–threonine 953 has biased composition (low complexity). Residues tyrosine 954–alanine 963 show a composition bias toward polar residues.

As to expression, by stage 11, isoform Q, isoform P and isoform Z are expressed throughout the mesoderm. From stage 15, expression of isoform P expands to all tissues, whereas expression of isoform Z and isoform Q becomes restricted during later stages; starting from stage 14 to 16, isoform Z is expressed in muscle, and isoform Q and isoform Z are expressed in the CNS. For some isoforms, expression is also seen in specific types of cells in the embryo; isoform Z is expressed in the ventral furrow at stage 5, and isoform Q is expressed around the tracheal pits at stage 11. Isoform Z also shows transient enrichment in a dorsal cell layer in the CNS at stages 13 and 14.

The protein localises to the nucleus. Putative transcription factor required for axon growth and guidance in the central and peripheral nervous systems. Repels CNS axons away from the midline by promoting the expression of the midline repellent sli and its receptor robo. The chain is Longitudinals lacking protein, isoforms J/P/Q/S/Z from Drosophila melanogaster (Fruit fly).